The following is a 466-amino-acid chain: Citrate synthase, mitochondrial (466 aa).

Residues 1–27 constitute a mitochondrion transit peptide; it reads MALLTAAARLLGTKNASCLVLAARHAS. The short motif at 2–21 is the SIFI-degron element; sequence ALLTAAARLLGTKNASCLVL. Lys-57 bears the N6-succinyllysine mark. N6-acetyllysine; alternate is present on Lys-76. Lys-76 is modified (N6-succinyllysine; alternate). N6-succinyllysine is present on residues Lys-103 and Lys-193. The active site involves His-301. An N6-acetyllysine; alternate mark is found at Lys-321 and Lys-327. An N6-succinyllysine; alternate mark is found at Lys-321 and Lys-327. Residue His-347 is part of the active site. Arg-356 provides a ligand contact to oxaloacetate. At Lys-375 the chain carries N6-acetyllysine; alternate. Lys-375 carries the post-translational modification N6-succinyllysine; alternate. Lys-382 is modified (N6-acetyllysine). Lys-393 is modified (N6-acetyllysine; alternate). N6-succinyllysine; alternate is present on Lys-393. Residue Lys-395 is modified to N6,N6,N6-trimethyllysine. Asp-402 is a catalytic residue. Oxaloacetate contacts are provided by Arg-428 and Arg-448. The residue at position 450 (Lys-450) is an N6-succinyllysine. Position 459 is an N6-acetyllysine; alternate (Lys-459). Position 459 is an N6-succinyllysine; alternate (Lys-459).

The protein belongs to the citrate synthase family. Homodimer. In terms of processing, methylated. Trimethylation at Lys-395 by CSKMT decreases citrate synthase activity. In response to mitochondrial stress, the precursor protein is ubiquitinated by the SIFI complex in the cytoplasm before mitochondrial import, leading to its degradation. Within the SIFI complex, UBR4 initiates ubiquitin chain that are further elongated or branched by KCMF1.

The protein localises to the mitochondrion matrix. The enzyme catalyses oxaloacetate + acetyl-CoA + H2O = citrate + CoA + H(+). It participates in carbohydrate metabolism; tricarboxylic acid cycle; isocitrate from oxaloacetate: step 1/2. Key enzyme of the Krebs tricarboxylic acid cycle which catalyzes the synthesis of citrate from acetyl coenzyme A and oxaloacetate. This Homo sapiens (Human) protein is Citrate synthase, mitochondrial (CS).